The chain runs to 111 residues: PCNA-associated factor (111 aa).

Residues 1-10 (MVRTKANSVP) show a composition bias toward polar residues. A disordered region spans residues 1–111 (MVRTKANSVP…PPDHTDDEKE (111 aa)). The residue at position 8 (S8) is a Phosphoserine. K15 is covalently cross-linked (Glycyl lysine isopeptide (Lys-Gly) (interchain with G-Cter in ubiquitin)). The D-box signature appears at 23-34 (RKVLGSSTSAAN). Position 24 is an N6-acetyllysine; alternate (K24). Residue K24 forms a Glycyl lysine isopeptide (Lys-Gly) (interchain with G-Cter in ubiquitin); alternate linkage. A compositionally biased stretch (polar residues) spans 27 to 39 (GSSTSAANSTPLS). Phosphoserine is present on residues S28, S31, and S72. The PIP-box motif lies at 62–72 (QKGIGEFFSLS). The segment covering 74–84 (KDSEKENRIPE) has biased composition (basic and acidic residues). Positions 78–80 (KEN) match the KEN box motif. Residues 85 to 97 (EAGSSGLGKAKRK) carry the Initiation motif motif.

Interacts (when monoubiquitinated at Lys-15 and Lys-24) with PCNA. Interacts with isoform 2/p33ING1b of ING1. Interacts with BRCA1. In terms of processing, monoubiquitinated at Lys-15 and Lys-24 during normal S phase, promoting its association with PCNA. Also diubiquitinated at these 2 sites. Following DNA damage, monoubiquitin chains at Lys-15 and Lys-24 are probably extended, leading to disrupt the interaction with PCNA. Polyubiquitinated by the APC/C complex at the mitotic exit, leading to its degradation by the proteasome.

The protein resides in the nucleus. The protein localises to the cytoplasm. It is found in the perinuclear region. PCNA-binding protein that acts as a regulator of DNA repair during DNA replication. Following DNA damage, the interaction with PCNA is disrupted, facilitating the interaction between monoubiquitinated PCNA and the translesion DNA synthesis DNA polymerase eta (POLH) at stalled replisomes, facilitating the bypass of replication-fork-blocking lesions. Also acts as a regulator of centrosome number. The protein is PCNA-associated factor of Bos taurus (Bovine).